We begin with the raw amino-acid sequence, 359 residues long: Fructose-bisphosphate aldolase (359 aa).

Residue Ser50 participates in D-glyceraldehyde 3-phosphate binding. Asp83 (proton donor) is an active-site residue. Zn(2+)-binding residues include His84, Asp105, Glu142, and His198. Position 199 (Gly199) interacts with dihydroxyacetone phosphate. Position 232 (His232) interacts with Zn(2+). Dihydroxyacetone phosphate-binding positions include 233 to 235 (GSS) and 275 to 278 (NIDT).

This sequence belongs to the class II fructose-bisphosphate aldolase family. Requires Zn(2+) as cofactor.

The catalysed reaction is beta-D-fructose 1,6-bisphosphate = D-glyceraldehyde 3-phosphate + dihydroxyacetone phosphate. The protein operates within carbohydrate degradation; glycolysis; D-glyceraldehyde 3-phosphate and glycerone phosphate from D-glucose: step 4/4. In terms of biological role, catalyzes the aldol condensation of dihydroxyacetone phosphate (DHAP or glycerone-phosphate) with glyceraldehyde 3-phosphate (G3P) to form fructose 1,6-bisphosphate (FBP) in gluconeogenesis and the reverse reaction in glycolysis. The chain is Fructose-bisphosphate aldolase (fba) from Nostoc commune.